Reading from the N-terminus, the 418-residue chain is Calreticulin (418 aa).

An N-terminal signal peptide occupies residues 1 to 17 (MLLPVPLLLGLLGLAAA). The interval 18–197 (EPVVYFKEQF…NSQVESGSLE (180 aa)) is N-domain. Gln-26 lines the Ca(2+) pocket. An N6-acetyllysine modification is found at Lys-48. 2 residues coordinate Ca(2+): Lys-62 and Lys-64. Lys-64 bears the N6-(2-hydroxyisobutyryl)lysine mark. Cys-105 and Cys-137 are disulfide-bonded. Residues Tyr-109, Lys-111, Tyr-128, and Asp-135 each coordinate an alpha-D-glucoside. At Lys-159 the chain carries N6-acetyllysine. A 1-1 repeat occupies 191–202 (VESGSLEDDWDF). Residues 191 to 255 (VESGSLEDDW…DAKKPEDWDE (65 aa)) form a 4 X approximate repeats region. Residues 193-277 (SGSLEDDWDF…NPEYKGEWKP (85 aa)) form a disordered region. Residues 198-308 (DDWDFLPPKK…YSPDANIYAY (111 aa)) are P-domain. The span at 207 to 251 (KIKDPDASKPEDWDERAKIDDPTDSKPEDWDKPEHIPDPDAKKPE) shows a compositional bias: basic and acidic residues. The residue at position 209 (Lys-209) is an N6-acetyllysine. 6 consecutive repeat copies span residues 210–221 (DPDASKPEDWDE), 227–238 (DPTDSKPEDWDK), 244–255 (DPDAKKPEDWDE), 259–269 (GEWEPPVIQNP), 273–283 (GEWKPRQIDNP), and 287–297 (GTWIHPEIDNP). Residues 237–270 (DKPEHIPDPDAKKPEDWDEEMDGEWEPPVIQNPE) form an interaction with PPIB region. The span at 252-261 (DWDEEMDGEW) shows a compositional bias: acidic residues. The tract at residues 259–297 (GEWEPPVIQNPEYKGEWKPRQIDNPDYKGTWIHPEIDNP) is 3 X approximate repeats. The interval 309 to 418 (DSFAVLGLDL…AAAGQAKDEL (110 aa)) is C-domain. Asp-317 lines the an alpha-D-glucoside pocket. Position 328 (Asp-328) interacts with Ca(2+). The segment at 349–418 (VTKTAEKQMK…AAAGQAKDEL (70 aa)) is disordered. Over residues 352-379 (TAEKQMKDKQDEEQRLKEEEEEKKRKEE) the composition is skewed to basic and acidic residues. Positions 380-409 (EEAEEDEEDKDDKEDEDEDEEDKDEEEEEA) are enriched in acidic residues. The Prevents secretion from ER signature appears at 415–418 (KDEL).

This sequence belongs to the calreticulin family. As to quaternary structure, monomer. Component of an EIF2 complex at least composed of CELF1/CUGBP1, CALR, CALR3, EIF2S1, EIF2S2, HSP90B1 and HSPA5. Interacts with PDIA3/ERp57 and SPACA9. Interacts with TRIM21. Interacts with NR3C1. Interacts with PPIB. Interacts (via P-domain) with PDIA5. Interacts with CLCC1.

It localises to the endoplasmic reticulum lumen. Its subcellular location is the cytoplasm. It is found in the cytosol. The protein localises to the secreted. The protein resides in the extracellular space. It localises to the extracellular matrix. Its subcellular location is the cell surface. It is found in the sarcoplasmic reticulum lumen. The protein localises to the cytoplasmic vesicle. The protein resides in the secretory vesicle. It localises to the cortical granule. Its subcellular location is the cytolytic granule. In terms of biological role, calcium-binding chaperone that promotes folding, oligomeric assembly and quality control in the endoplasmic reticulum (ER) via the calreticulin/calnexin cycle. This lectin interacts transiently with almost all of the monoglucosylated glycoproteins that are synthesized in the ER. Interacts with the DNA-binding domain of NR3C1 and mediates its nuclear export. Involved in maternal gene expression regulation. May participate in oocyte maturation via the regulation of calcium homeostasis. Present in the cortical granules of non-activated oocytes, is exocytosed during the cortical reaction in response to oocyte activation and might participate in the block to polyspermy. The protein is Calreticulin (CALR) of Oryctolagus cuniculus (Rabbit).